The sequence spans 179 residues: Cytochrome b6-f complex iron-sulfur subunit (179 aa).

A helical transmembrane segment spans residues 20 to 42 (LLTFGTITGVAAGALYPIVKYFI). A Rieske domain is found at 60–161 (GNDVIVSQFL…ANVTDNDKVV (102 aa)). The [2Fe-2S] cluster site is built by C107, H109, C125, and H128. C112 and C127 form a disulfide bridge.

Belongs to the Rieske iron-sulfur protein family. In terms of assembly, the 4 large subunits of the cytochrome b6-f complex are cytochrome b6, subunit IV (17 kDa polypeptide, PetD), cytochrome f and the Rieske protein, while the 4 small subunits are PetG, PetL, PetM and PetN. The complex functions as a dimer. [2Fe-2S] cluster serves as cofactor.

The protein resides in the cellular thylakoid membrane. The enzyme catalyses 2 oxidized [plastocyanin] + a plastoquinol + 2 H(+)(in) = 2 reduced [plastocyanin] + a plastoquinone + 4 H(+)(out). Functionally, component of the cytochrome b6-f complex, which mediates electron transfer between photosystem II (PSII) and photosystem I (PSI), cyclic electron flow around PSI, and state transitions. This Microcystis aeruginosa (strain NIES-843 / IAM M-2473) protein is Cytochrome b6-f complex iron-sulfur subunit.